A 287-amino-acid polypeptide reads, in one-letter code: Phosphoribosylaminoimidazole-succinocarboxamide synthase (287 aa).

The protein belongs to the SAICAR synthetase family.

The catalysed reaction is 5-amino-1-(5-phospho-D-ribosyl)imidazole-4-carboxylate + L-aspartate + ATP = (2S)-2-[5-amino-1-(5-phospho-beta-D-ribosyl)imidazole-4-carboxamido]succinate + ADP + phosphate + 2 H(+). It participates in purine metabolism; IMP biosynthesis via de novo pathway; 5-amino-1-(5-phospho-D-ribosyl)imidazole-4-carboxamide from 5-amino-1-(5-phospho-D-ribosyl)imidazole-4-carboxylate: step 1/2. This chain is Phosphoribosylaminoimidazole-succinocarboxamide synthase, found in Neisseria meningitidis serogroup A / serotype 4A (strain DSM 15465 / Z2491).